The primary structure comprises 273 residues: Large ribosomal subunit protein uL2 (273 aa).

The tract at residues 228–273 (IDHPHGGGEGKTSGGRHPVTPWGFSTKGKKTRKNKRTSKFIVKKRK) is disordered. The span at 254–273 (KGKKTRKNKRTSKFIVKKRK) shows a compositional bias: basic residues.

The protein belongs to the universal ribosomal protein uL2 family. Part of the 50S ribosomal subunit. Forms a bridge to the 30S subunit in the 70S ribosome.

Functionally, one of the primary rRNA binding proteins. Required for association of the 30S and 50S subunits to form the 70S ribosome, for tRNA binding and peptide bond formation. It has been suggested to have peptidyltransferase activity; this is somewhat controversial. Makes several contacts with the 16S rRNA in the 70S ribosome. In Rickettsia typhi (strain ATCC VR-144 / Wilmington), this protein is Large ribosomal subunit protein uL2.